Consider the following 152-residue polypeptide: Plant UBX domain-containing protein 12 (152 aa).

The tract at residues 32–61 (KRFSEEESEETENTTNSSNAVFGFPNLPEE) is disordered. A UBX domain is found at 67 to 150 (DQSVLCRICV…GLANSLVSVT (84 aa)).

The chain is Plant UBX domain-containing protein 12 from Arabidopsis thaliana (Mouse-ear cress).